Consider the following 155-residue polypeptide: Ribosomal RNA large subunit methyltransferase H (155 aa).

S-adenosyl-L-methionine is bound by residues Leu-73, Gly-104, and 123–128 (LSPLTL).

The protein belongs to the RNA methyltransferase RlmH family. As to quaternary structure, homodimer.

It localises to the cytoplasm. The catalysed reaction is pseudouridine(1915) in 23S rRNA + S-adenosyl-L-methionine = N(3)-methylpseudouridine(1915) in 23S rRNA + S-adenosyl-L-homocysteine + H(+). Functionally, specifically methylates the pseudouridine at position 1915 (m3Psi1915) in 23S rRNA. In Pseudomonas fluorescens (strain ATCC BAA-477 / NRRL B-23932 / Pf-5), this protein is Ribosomal RNA large subunit methyltransferase H.